We begin with the raw amino-acid sequence, 156 residues long: Small ribosomal subunit protein uS7 (156 aa).

This sequence belongs to the universal ribosomal protein uS7 family. Part of the 30S ribosomal subunit. Contacts proteins S9 and S11.

In terms of biological role, one of the primary rRNA binding proteins, it binds directly to 16S rRNA where it nucleates assembly of the head domain of the 30S subunit. Is located at the subunit interface close to the decoding center, probably blocks exit of the E-site tRNA. The protein is Small ribosomal subunit protein uS7 of Ralstonia nicotianae (strain ATCC BAA-1114 / GMI1000) (Ralstonia solanacearum).